A 486-amino-acid chain; its full sequence is Aspartyl/glutamyl-tRNA(Asn/Gln) amidotransferase subunit B (486 aa).

It belongs to the GatB/GatE family. GatB subfamily. Heterotrimer of A, B and C subunits.

It carries out the reaction L-glutamyl-tRNA(Gln) + L-glutamine + ATP + H2O = L-glutaminyl-tRNA(Gln) + L-glutamate + ADP + phosphate + H(+). It catalyses the reaction L-aspartyl-tRNA(Asn) + L-glutamine + ATP + H2O = L-asparaginyl-tRNA(Asn) + L-glutamate + ADP + phosphate + 2 H(+). Allows the formation of correctly charged Asn-tRNA(Asn) or Gln-tRNA(Gln) through the transamidation of misacylated Asp-tRNA(Asn) or Glu-tRNA(Gln) in organisms which lack either or both of asparaginyl-tRNA or glutaminyl-tRNA synthetases. The reaction takes place in the presence of glutamine and ATP through an activated phospho-Asp-tRNA(Asn) or phospho-Glu-tRNA(Gln). The chain is Aspartyl/glutamyl-tRNA(Asn/Gln) amidotransferase subunit B from Orientia tsutsugamushi (strain Boryong) (Rickettsia tsutsugamushi).